The chain runs to 184 residues: ATP synthase subunit b, chloroplastic (184 aa).

A helical transmembrane segment spans residues 27–49 (LATNLINLSVVIGVLIFFGKGVL).

The protein belongs to the ATPase B chain family. In terms of assembly, F-type ATPases have 2 components, F(1) - the catalytic core - and F(0) - the membrane proton channel. F(1) has five subunits: alpha(3), beta(3), gamma(1), delta(1), epsilon(1). F(0) has four main subunits: a(1), b(1), b'(1) and c(10-14). The alpha and beta chains form an alternating ring which encloses part of the gamma chain. F(1) is attached to F(0) by a central stalk formed by the gamma and epsilon chains, while a peripheral stalk is formed by the delta, b and b' chains.

Its subcellular location is the plastid. The protein resides in the chloroplast thylakoid membrane. In terms of biological role, f(1)F(0) ATP synthase produces ATP from ADP in the presence of a proton or sodium gradient. F-type ATPases consist of two structural domains, F(1) containing the extramembraneous catalytic core and F(0) containing the membrane proton channel, linked together by a central stalk and a peripheral stalk. During catalysis, ATP synthesis in the catalytic domain of F(1) is coupled via a rotary mechanism of the central stalk subunits to proton translocation. Its function is as follows. Component of the F(0) channel, it forms part of the peripheral stalk, linking F(1) to F(0). The protein is ATP synthase subunit b, chloroplastic of Jasminum nudiflorum (Winter jasmine).